We begin with the raw amino-acid sequence, 226 residues long: UPF0758 protein GWCH70_2550 (226 aa).

Residues 104 to 226 enclose the MPN domain; it reads VIRSPEDGAK…FVSLKEKGYV (123 aa). Zn(2+)-binding residues include histidine 175, histidine 177, and aspartate 188. The JAMM motif signature appears at 175–188; that stretch reads HNHPSGDPTPSRED.

This sequence belongs to the UPF0758 family.

The protein is UPF0758 protein GWCH70_2550 of Geobacillus sp. (strain WCH70).